Here is a 154-residue protein sequence, read N- to C-terminus: Large ribosomal subunit protein uL13 (154 aa).

Belongs to the universal ribosomal protein uL13 family. Part of the 50S ribosomal subunit.

Its function is as follows. This protein is one of the early assembly proteins of the 50S ribosomal subunit, although it is not seen to bind rRNA by itself. It is important during the early stages of 50S assembly. This is Large ribosomal subunit protein uL13 from Rhodopseudomonas palustris (strain ATCC BAA-98 / CGA009).